A 434-amino-acid polypeptide reads, in one-letter code: Evolutionarily conserved signaling intermediate in Toll pathway, mitochondrial (434 aa).

The transit peptide at 1–48 directs the protein to the mitochondrion; sequence MSWVQVNLLARGLSRGWGSICRTVLSGTPFAQPSLQARGLHCSAVTHK. A Glycyl lysine isopeptide (Lys-Gly) (interchain with G-Cter in ubiquitin) cross-link involves residue lysine 371. The interval 403–434 is disordered; it reads TRLEGQSPPHSPPKGPEEDDEAIQAQQRQGQS.

The protein belongs to the ECSIT family. Interacts with MAP3K1, SMAD4 and TRAF6. Interacts with SMAD1 only after BMP4-treatment. Part of the mitochondrial complex I assembly/MCIA complex that comprises at least the core subunits TMEM126B, NDUFAF1, ECSIT and ACAD9 and complement subunits such as COA1 and TMEM186. Interacts with NDUFAF1. Interacts with ACAD9. Interacts with TRIM59. Interacts with TMEM70 and TMEM242. Interacts (when ubiquitinated) with NF-kappa-B subunits RELA and NFKB1. Interacts with RIGI, IFIT1 and MAVS; these interactions promote RLR-mediated type I IFN induction. Interacts with SQSTM1; this interaction inhibits TLR4 signaling via functional regulation of the TRAF6-ECSIT complex. Interacts with cereblon/CRBN; this interaction inhibits the ubiquitination of ECSIT. Ubiquitinated on Lys-371; leading to translocation in the nucleus together with RELA and NFKB1 and expression of NF-kappa-B-dependent genes.

It localises to the cytoplasm. The protein resides in the nucleus. Its subcellular location is the mitochondrion. Adapter protein that plays a role in different signaling pathways including TLRs and IL-1 pathways or innate antiviral induction signaling. Plays a role in the activation of NF-kappa-B by forming a signal complex with TRAF6 and TAK1/MAP3K7 to activate TAK1/MAP3K7 leading to activation of IKKs. Once ubiquitinated, interacts with the dissociated RELA and NFKB1 proteins and translocates to the nucleus where it induces NF-kappa-B-dependent gene expression. Plays a role in innate antiviral immune response by bridging the pattern recognition receptors RIGI and MDA5/IFIT1 to the MAVS complex at the mitochondrion. Promotes proteolytic activation of MAP3K1. Involved in the BMP signaling pathway. Required for normal embryonic development. Functionally, as part of the MCIA complex, involved in the assembly of the mitochondrial complex I. The protein is Evolutionarily conserved signaling intermediate in Toll pathway, mitochondrial of Rattus norvegicus (Rat).